A 131-amino-acid polypeptide reads, in one-letter code: Plastocyanin (131 aa).

An N-terminal signal peptide occupies residues Met-1–Ala-34. The Plastocyanin-like domain maps to Ala-35–Glu-131. Positions 73, 116, 119, and 124 each coordinate Cu cation.

The protein belongs to the plastocyanin family. Cu(2+) is required as a cofactor.

The protein localises to the cellular thylakoid membrane. Participates in electron transfer between P700 and the cytochrome b6-f complex in photosystem I. The sequence is that of Plastocyanin (petE) from Prochlorothrix hollandica.